Reading from the N-terminus, the 212-residue chain is 3-oxo-tetronate 4-phosphate decarboxylase (212 aa).

The Proton acceptor role is filled by E79. Residues E79, H98, and H100 each contribute to the Zn(2+) site. Y125 serves as the catalytic Proton donor. H165 is a Zn(2+) binding site.

This sequence belongs to the aldolase class II family. AraD/FucA subfamily. The cofactor is Zn(2+).

The enzyme catalyses 3-dehydro-4-O-phospho-D-erythronate + H(+) = dihydroxyacetone phosphate + CO2. The catalysed reaction is 3-dehydro-4-O-phospho-L-erythronate + H(+) = dihydroxyacetone phosphate + CO2. Its function is as follows. Catalyzes the decarboxylation of 3-oxo-tetronate 4-phosphate to dihydroxyacetone phosphate (DHAP) and CO(2). The chain is 3-oxo-tetronate 4-phosphate decarboxylase from Escherichia coli (strain K12).